Consider the following 348-residue polypeptide: EGF-like domain containing protein 1 (348 aa).

A signal peptide spans 1–19 (MFYLSTFMTIVISLSLVSC). The EGF-like domain occupies 60 to 92 (TGSDCKVTCQNNGRCYDGNKCLCSSDYTGHLCE). 3 disulfides stabilise this stretch: cysteine 64/cysteine 74, cysteine 68/cysteine 80, and cysteine 82/cysteine 91. A ZP domain is found at 99 to 342 (RCTLDGVVFE…PTCAAPAVSQ (244 aa)).

Prismatic layer of shell (at protein level). Expressed primarily in the mantle with highest level in the mantle edge and lower level in the mantle pallium.

Its subcellular location is the secreted. In Margaritifera margaritifera (Freshwater pearl mussel), this protein is EGF-like domain containing protein 1.